Here is a 1545-residue protein sequence, read N- to C-terminus: Immunoglobulin A1 protease autotransporter (1545 aa).

A signal peptide spans 1–25 (MLNKKFKLNFIALTVAYALTPYTEA). The Peptidase S6 domain occupies 26–336 (ALVRDDVDYQ…NIYKPEFAEK (311 aa)). Residue serine 292 is part of the active site. Polar residues predominate over residues 995–1019 (TVDTTNITTPNNIQADVPSVPSNNE). Positions 995–1246 (TVDTTNITTP…NVEPATTSSN (252 aa)) are disordered. The segment covering 1036–1046 (TPSETTETVAE) has biased composition (low complexity). Residues 1048-1060 (SKQESKTVEKNEQ) show a composition bias toward basic and acidic residues. Over residues 1080–1094 (VKANTQTNEVAQSGS) the composition is skewed to polar residues. A compositionally biased stretch (basic and acidic residues) spans 1095–1125 (ETKETQTTETKETATVEKEEKAKVETEKTQE). Polar residues-rich tracts occupy residues 1129–1145 (VTSQ…TVQP) and 1161–1222 (EPQS…SSNK). The Autotransporter domain maps to 1293 to 1545 (NNEGQYNVWV…TAELKLSFSF (253 aa)).

It is found in the periplasm. The protein resides in the secreted. The protein localises to the cell surface. It localises to the cell outer membrane. The catalysed reaction is Cleavage of immunoglobulin A molecules at certain Pro-|-Xaa bonds in the hinge region. No small molecule substrates are known.. Virulence factor; cleaves host immunoglobulin A producing intact Fc and Fab fragments. The chain is Immunoglobulin A1 protease autotransporter (iga) from Haemophilus influenzae.